The chain runs to 545 residues: CTP synthase (545 aa).

Residues 1–266 (MTTKYIFVTG…DSYFTERFGL (266 aa)) form an amidoligase domain region. S14 contacts CTP. Residue S14 coordinates UTP. Residues 15–20 (SLGKGI) and D72 each bind ATP. Positions 72 and 140 each coordinate Mg(2+). CTP-binding positions include 147–149 (DIE), 187–192 (KTKPTQ), and K223. UTP is bound by residues 187-192 (KTKPTQ) and K223. An ATP-binding site is contributed by 239-241 (KDV). One can recognise a Glutamine amidotransferase type-1 domain in the interval 291 to 542 (TIGMVGKYVS…VKAAGEYQKR (252 aa)). G352 serves as a coordination point for L-glutamine. The Nucleophile; for glutamine hydrolysis role is filled by C379. L-glutamine is bound by residues 380–383 (LGMQ), E403, and R470. Catalysis depends on residues H515 and E517.

It belongs to the CTP synthase family. In terms of assembly, homotetramer.

The enzyme catalyses UTP + L-glutamine + ATP + H2O = CTP + L-glutamate + ADP + phosphate + 2 H(+). The catalysed reaction is L-glutamine + H2O = L-glutamate + NH4(+). It catalyses the reaction UTP + NH4(+) + ATP = CTP + ADP + phosphate + 2 H(+). It participates in pyrimidine metabolism; CTP biosynthesis via de novo pathway; CTP from UDP: step 2/2. With respect to regulation, allosterically activated by GTP, when glutamine is the substrate; GTP has no effect on the reaction when ammonia is the substrate. The allosteric effector GTP functions by stabilizing the protein conformation that binds the tetrahedral intermediate(s) formed during glutamine hydrolysis. Inhibited by the product CTP, via allosteric rather than competitive inhibition. Its function is as follows. Catalyzes the ATP-dependent amination of UTP to CTP with either L-glutamine or ammonia as the source of nitrogen. Regulates intracellular CTP levels through interactions with the four ribonucleotide triphosphates. The polypeptide is CTP synthase (Aeromonas hydrophila subsp. hydrophila (strain ATCC 7966 / DSM 30187 / BCRC 13018 / CCUG 14551 / JCM 1027 / KCTC 2358 / NCIMB 9240 / NCTC 8049)).